The primary structure comprises 1002 residues: Ephrin type-B receptor 5 (1002 aa).

An N-terminal signal peptide occupies residues 1-29; the sequence is MDSNADISARRVSGMDWLWLVCFFHLVTS. Residues 30–564 are Extracellular-facing; it reads LEEILLDTTG…AQDRLPLIVG (535 aa). One can recognise an Eph LBD domain in the interval 31 to 213; it reads EEILLDTTGE…FFYKCPAVVK (183 aa). 2 consecutive Fibronectin type-III domains span residues 344–452 and 453–548; these read APRD…TSQS and VPSA…TLMA. N-linked (GlcNAc...) asparagine glycosylation is present at asparagine 446. Residues 565-585 form a helical membrane-spanning segment; the sequence is SALGGLAFLVIAAIAILAIIF. Residues 586–1002 are Cytoplasmic-facing; that stretch reads KSKRRETPYT…HLNQLEPVEV (417 aa). The Protein kinase domain occupies 637–900; it reads IKIEEVIGSG…QIVSALDKMI (264 aa). Residues 643–651 and lysine 669 contribute to the ATP site; that span reads IGSGEFGEV. Aspartate 762 acts as the Proton acceptor in catalysis. The interval 906–928 is disordered; sequence LKATGTGSSRPSQPLLSNSPPDF. Residues 910–928 are compositionally biased toward polar residues; that stretch reads GTGSSRPSQPLLSNSPPDF. The SAM domain occupies 929 to 993; it reads PSLSNAHEWL…LNSIQLMKVH (65 aa). Residues 1000-1002 carry the PDZ-binding motif; that stretch reads VEV.

It belongs to the protein kinase superfamily. Tyr protein kinase family. Ephrin receptor subfamily. In terms of tissue distribution, most abundant in thymus and detectable in brain, retina, kidney, lung and heart. Not detected in skeletal muscle and liver.

The protein resides in the membrane. The enzyme catalyses L-tyrosyl-[protein] + ATP = O-phospho-L-tyrosyl-[protein] + ADP + H(+). Receptor for members of the ephrin-B family. The sequence is that of Ephrin type-B receptor 5 (EPHB5) from Gallus gallus (Chicken).